The sequence spans 249 residues: MEELILGIVQGLTEFLPISSSGHLAIFTAIFNSTPDVGYFAFLHLATFLAVLIFVKSEVFEIVNGISKKDNEYINLASKLVLSTIPAVIVGLCFGDFIESVFSSTFLIGVFLSITGILMLLSDKLNQNLKTIKSIPYLDAMIVGIFQAFSVLPGISRSGTTLFAALFLGMKKEDAVKYSFLMGLPVTFGAGILELQKVSFSAEQLFGFVISFLTGLLGLYLVKKMVIGGKLKIFGYYCFLASFFVLMFL.

Helical transmembrane passes span 11-31 (GLTE…TAIF), 35-55 (PDVG…LIFV), 80-100 (LVLS…FIES), 101-121 (VFSS…LMLL), 135-155 (IPYL…LPGI), 175-195 (AVKY…ILEL), 202-222 (AEQL…LYLV), and 226-246 (VIGG…FFVL).

This sequence belongs to the UppP family.

The protein resides in the cell membrane. The enzyme catalyses di-trans,octa-cis-undecaprenyl diphosphate + H2O = di-trans,octa-cis-undecaprenyl phosphate + phosphate + H(+). Functionally, catalyzes the dephosphorylation of undecaprenyl diphosphate (UPP). The polypeptide is Undecaprenyl-diphosphatase (Methanococcus maripaludis (strain C5 / ATCC BAA-1333)).